The sequence spans 630 residues: Auxin efflux carrier component 2 (630 aa).

The Extracellular segment spans residues 1–6 (MITGRD). A helical membrane pass occupies residues 7–27 (IYDVLAAIVPLYVAMFLAYGS). The Cytoplasmic segment spans residues 28 to 38 (VRWWGIFTPDQ). The chain crosses the membrane as a helical span at residues 39 to 59 (CSGINRFVAVFAVPLLSFHFI). V51 provides a ligand contact to (indol-3-yl)acetate. The Extracellular portion of the chain corresponds to 60–70 (STNDPYSMNYR). Residues 71 to 91 (FLAADSLQKLVILAALAVWHN) form a helical membrane-spanning segment. At 92–108 (LLSRYRRNGGAAASLDW) the chain is on the cytoplasmic side. The chain crosses the membrane as a helical span at residues 109–129 (TITLFSLSTLPNTLVMGIPLL). The (indol-3-yl)acetate site is built by N120 and L122. Residues 130 to 139 (RAMYGDFSGS) are Extracellular-facing. The chain crosses the membrane as a helical span at residues 140–160 (LMVQIVVLQSVIWYTLMLFLF). Y153 provides a ligand contact to (indol-3-yl)acetate. Residues 161–490 (EYRGAKALIS…LIRNPNTYSS (330 aa)) are Cytoplasmic-facing. Positions 317–350 (ASGKAADPPSYPAPNPGMMPAPRKKELGGSNSNS) are disordered. Over residues 325–335 (PSYPAPNPGMM) the composition is skewed to pro residues. A helical membrane pass occupies residues 491 to 511 (LIGLVWSLVSFRWNIQMPSII). At 512 to 514 (KGS) the chain is on the extracellular side. The chain crosses the membrane as a helical span at residues 515–535 (ISILSDAGLGMAMFSLGLFMA). Over 536-549 (LQPKIISCGKTVAT) the chain is Cytoplasmic. The chain crosses the membrane as a helical span at residues 550–570 (FAMAVRFLTGPAVIAATSIAI). The Extracellular segment spans residues 571–574 (GLRG). A helical membrane pass occupies residues 575-595 (VLLHVAIVQAALPQGIVPFVF). (indol-3-yl)acetate-binding residues include I590 and V591. Residues 596–609 (AKEYNCHPQILSTA) lie on the Cytoplasmic side of the membrane. A helical membrane pass occupies residues 610–630 (VIFGMLIALPITILYYVLLGI).

It belongs to the auxin efflux carrier (TC 2.A.69.1) family. In terms of assembly, homodimer. As to expression, expressed in roots, leaves, shoot apex and panicles. Expressed in roots, stem bases and young panicles.

Its subcellular location is the membrane. Functionally, acts as a component of the auxin efflux carrier. Involved in the basipetal polar auxin transport which contributes to the spreading growth of the tillers. The chain is Auxin efflux carrier component 2 from Oryza sativa subsp. japonica (Rice).